We begin with the raw amino-acid sequence, 37 residues long: Large ribosomal subunit protein bL36 (37 aa).

Belongs to the bacterial ribosomal protein bL36 family.

The chain is Large ribosomal subunit protein bL36 from Polaromonas naphthalenivorans (strain CJ2).